A 328-amino-acid chain; its full sequence is uncharacterized protein (328 aa).

The segment at 1 to 22 (MPVKPNQPRPSTKQDPSSGASR) is disordered. Over residues 9-21 (RPSTKQDPSSGAS) the composition is skewed to polar residues. A run of 6 helical transmembrane segments spans residues 66 to 86 (FSFLSLIPILMVSFATAGFVL), 126 to 146 (TVGLTGLLIALYSGVNWIGNL), 176 to 196 (FLSLIGLLLALVITLFLTSVA), 221 to 241 (LIALSISIFANYLLFLWILWV), 255 to 275 (GTLMAAIGFEALKFAMTVALP), and 290 to 310 (IGLMTFFYFFARLTLFCAAWI).

To E.coli YhjD.

It localises to the cell inner membrane. This is an uncharacterized protein from Dickeya dadantii (strain 3937) (Erwinia chrysanthemi (strain 3937)).